Consider the following 333-residue polypeptide: Probable pyridoxal reductase 2 (333 aa).

Residue tyrosine 52 is the Proton donor of the active site.

The protein belongs to the aldo/keto reductase family.

The protein localises to the cytoplasm. The enzyme catalyses pyridoxine + NADP(+) = pyridoxal + NADPH + H(+). In terms of biological role, catalyzes the reduction of pyridoxal (PL) with NADPH and oxidation of pyridoxine (PN) with NADP(+). In Schizosaccharomyces pombe (strain 972 / ATCC 24843) (Fission yeast), this protein is Probable pyridoxal reductase 2.